The chain runs to 437 residues: Chromosomal replication initiator protein DnaA (437 aa).

A domain I, interacts with DnaA modulators region spans residues 1–74 (MNLAWNKILE…EACGDKIPVE (74 aa)). A domain II region spans residues 74–98 (EILIETKATSPLQSFLEKSFDQKDF). The segment at 99–315 (QFNPDYTFET…GALNDIYLYK (217 aa)) is domain III, AAA+ region. ATP-binding residues include glycine 142, glycine 144, lysine 145, and threonine 146. Residues 316-437 (KSYSLLFLNL…ERISSKYKLQ (122 aa)) form a domain IV, binds dsDNA region.

The protein belongs to the DnaA family. Oligomerizes as a right-handed, spiral filament on DNA at oriC.

The protein resides in the cytoplasm. Its function is as follows. Plays an essential role in the initiation and regulation of chromosomal replication. ATP-DnaA binds to the origin of replication (oriC) to initiate formation of the DNA replication initiation complex once per cell cycle. Binds the DnaA box (a 9 base pair repeat at the origin) and separates the double-stranded (ds)DNA. Forms a right-handed helical filament on oriC DNA; dsDNA binds to the exterior of the filament while single-stranded (ss)DNA is stabiized in the filament's interior. The ATP-DnaA-oriC complex binds and stabilizes one strand of the AT-rich DNA unwinding element (DUE), permitting loading of DNA polymerase. After initiation quickly degrades to an ADP-DnaA complex that is not apt for DNA replication. Binds acidic phospholipids. This chain is Chromosomal replication initiator protein DnaA, found in Leptospira borgpetersenii serovar Hardjo-bovis (strain JB197).